The primary structure comprises 199 residues: N-(5'-phosphoribosyl)anthranilate isomerase (199 aa).

This sequence belongs to the TrpF family.

The enzyme catalyses N-(5-phospho-beta-D-ribosyl)anthranilate = 1-(2-carboxyphenylamino)-1-deoxy-D-ribulose 5-phosphate. It functions in the pathway amino-acid biosynthesis; L-tryptophan biosynthesis; L-tryptophan from chorismate: step 3/5. The sequence is that of N-(5'-phosphoribosyl)anthranilate isomerase from Clostridium kluyveri (strain NBRC 12016).